The chain runs to 398 residues: Dual-specificity RNA methyltransferase RlmN (398 aa).

Glu-119 (proton acceptor) is an active-site residue. The Radical SAM core domain occupies 125–364 (DGDRATLCVS…TIVRKTRGDD (240 aa)). Cys-132 and Cys-369 are joined by a disulfide. Residues Cys-139, Cys-143, and Cys-146 each contribute to the [4Fe-4S] cluster site. S-adenosyl-L-methionine contacts are provided by residues 193-194 (GE), Ser-225, 247-249 (SLH), and Asn-326. Cys-369 (S-methylcysteine intermediate) is an active-site residue.

It belongs to the radical SAM superfamily. RlmN family. [4Fe-4S] cluster serves as cofactor.

The protein localises to the cytoplasm. It carries out the reaction adenosine(2503) in 23S rRNA + 2 reduced [2Fe-2S]-[ferredoxin] + 2 S-adenosyl-L-methionine = 2-methyladenosine(2503) in 23S rRNA + 5'-deoxyadenosine + L-methionine + 2 oxidized [2Fe-2S]-[ferredoxin] + S-adenosyl-L-homocysteine. The catalysed reaction is adenosine(37) in tRNA + 2 reduced [2Fe-2S]-[ferredoxin] + 2 S-adenosyl-L-methionine = 2-methyladenosine(37) in tRNA + 5'-deoxyadenosine + L-methionine + 2 oxidized [2Fe-2S]-[ferredoxin] + S-adenosyl-L-homocysteine. Functionally, specifically methylates position 2 of adenine 2503 in 23S rRNA and position 2 of adenine 37 in tRNAs. m2A2503 modification seems to play a crucial role in the proofreading step occurring at the peptidyl transferase center and thus would serve to optimize ribosomal fidelity. In Serratia proteamaculans (strain 568), this protein is Dual-specificity RNA methyltransferase RlmN.